Consider the following 37-residue polypeptide: Disintegrin morulustatin (37 aa).

3 disulfides stabilise this stretch: C12–C16, C22–C36, and C24–C31.

It belongs to the venom metalloproteinase (M12B) family. P-II subfamily. P-IIa sub-subfamily. As to expression, expressed by the venom gland.

The protein localises to the secreted. Its function is as follows. Inhibits ADP-induced platelet aggregation in human whole blood in a concentration-dependent manner (IC(50)=89.5 nM). This is Disintegrin morulustatin from Crotalus morulus (Tamaulipan rock rattlesnake).